Consider the following 546-residue polypeptide: Light-independent protochlorophyllide reductase subunit B (546 aa).

Aspartate 36 is a [4Fe-4S] cluster binding site. The active-site Proton donor is the aspartate 287. 422–423 (GL) is a substrate binding site. Residues 443–501 (PSHLSAHRPTGEAVGDAVGEPPAAPRDQAAPAATLDGSAAQSDPARTTPPGAPSWEDSA) are disordered.

It belongs to the ChlB/BchB/BchZ family. Protochlorophyllide reductase is composed of three subunits; BchL, BchN and BchB. Forms a heterotetramer of two BchB and two BchN subunits. Requires [4Fe-4S] cluster as cofactor.

The enzyme catalyses chlorophyllide a + oxidized 2[4Fe-4S]-[ferredoxin] + 2 ADP + 2 phosphate = protochlorophyllide a + reduced 2[4Fe-4S]-[ferredoxin] + 2 ATP + 2 H2O. Its pathway is porphyrin-containing compound metabolism; bacteriochlorophyll biosynthesis (light-independent). Its function is as follows. Component of the dark-operative protochlorophyllide reductase (DPOR) that uses Mg-ATP and reduced ferredoxin to reduce ring D of protochlorophyllide (Pchlide) to form chlorophyllide a (Chlide). This reaction is light-independent. The NB-protein (BchN-BchB) is the catalytic component of the complex. The sequence is that of Light-independent protochlorophyllide reductase subunit B from Rhodospirillum rubrum (strain ATCC 11170 / ATH 1.1.1 / DSM 467 / LMG 4362 / NCIMB 8255 / S1).